The following is a 386-amino-acid chain: Ribonuclease D (386 aa).

One can recognise a 3'-5' exonuclease domain in the interval 3–174; that stretch reads HTITTTDELA…EIYEYLSAEL (172 aa). Residues 213 to 294 form the HRDC domain; it reads SGRVVAIAQQ…ARGMSVPNSE (82 aa).

It belongs to the RNase D family. A divalent metal cation is required as a cofactor.

Its subcellular location is the cytoplasm. It catalyses the reaction Exonucleolytic cleavage that removes extra residues from the 3'-terminus of tRNA to produce 5'-mononucleotides.. Exonuclease involved in the 3' processing of various precursor tRNAs. Initiates hydrolysis at the 3'-terminus of an RNA molecule and releases 5'-mononucleotides. The sequence is that of Ribonuclease D from Jannaschia sp. (strain CCS1).